Consider the following 362-residue polypeptide: Anthranilate phosphoribosyltransferase 2 (362 aa).

Residues G103, 106–107 (GD), T111, 113–116 (NIST), 131–139 (KHGNRSASS), and S143 each bind 5-phospho-alpha-D-ribose 1-diphosphate. G103 is an anthranilate binding site. Mg(2+) is bound at residue S115. N134 contributes to the anthranilate binding site. R189 contributes to the anthranilate binding site. Mg(2+) contacts are provided by D248 and E249.

This sequence belongs to the anthranilate phosphoribosyltransferase family. As to quaternary structure, homodimer. Mg(2+) is required as a cofactor.

It carries out the reaction N-(5-phospho-beta-D-ribosyl)anthranilate + diphosphate = 5-phospho-alpha-D-ribose 1-diphosphate + anthranilate. Its pathway is amino-acid biosynthesis; L-tryptophan biosynthesis; L-tryptophan from chorismate: step 2/5. Functionally, catalyzes the transfer of the phosphoribosyl group of 5-phosphorylribose-1-pyrophosphate (PRPP) to anthranilate to yield N-(5'-phosphoribosyl)-anthranilate (PRA). This Nostoc sp. (strain PCC 7120 / SAG 25.82 / UTEX 2576) protein is Anthranilate phosphoribosyltransferase 2.